The chain runs to 230 residues: Large ribosomal subunit protein uL1 (230 aa).

This sequence belongs to the universal ribosomal protein uL1 family. As to quaternary structure, part of the 50S ribosomal subunit.

Functionally, binds directly to 23S rRNA. The L1 stalk is quite mobile in the ribosome, and is involved in E site tRNA release. Protein L1 is also a translational repressor protein, it controls the translation of the L11 operon by binding to its mRNA. The chain is Large ribosomal subunit protein uL1 from Bacillus anthracis (strain A0248).